The sequence spans 386 residues: 2-deoxy-scyllo-inosose synthase (386 aa).

Residues Asp-42, 73-76 (EEHK), 105-109 (GVTGN), 129-130 (TT), 140-142 (SLK), and 151-152 (KN) each bind NAD(+). Lys-142 is an active-site residue. Glu-184 contributes to the Co(2+) binding site. Glu-244 is an active-site residue. His-247 and His-263 together coordinate Co(2+).

Belongs to the sugar phosphate cyclases superfamily. DOI synthase family. NAD(+) is required as a cofactor. Requires Co(2+) as cofactor.

The enzyme catalyses D-glucose 6-phosphate = 2-deoxy-L-scyllo-inosose + phosphate. It functions in the pathway metabolic intermediate biosynthesis; 2-deoxystreptamine biosynthesis; 2-deoxystreptamine from D-glucose 6-phosphate: step 1/4. Its pathway is antibiotic biosynthesis; tobramycin biosynthesis. Functionally, catalyzes the intramolecular carbocycle formation from D-glucose-6-phosphate to 2-deoxy-scyllo-inosose (DOI). This is 2-deoxy-scyllo-inosose synthase (tbmA) from Streptoalloteichus tenebrarius (strain ATCC 17920 / DSM 40477 / JCM 4838 / CBS 697.72 / NBRC 16177 / NCIMB 11028 / NRRL B-12390 / A12253. 1 / ISP 5477) (Streptomyces tenebrarius).